A 139-amino-acid polypeptide reads, in one-letter code: 6,7-dimethyl-8-ribityllumazine synthase (139 aa).

Residues F13, 45–47 (VFD), and 69–71 (AVI) contribute to the 5-amino-6-(D-ribitylamino)uracil site. Residue 74 to 75 (AT) coordinates (2S)-2-hydroxy-3-oxobutyl phosphate. H77 acts as the Proton donor in catalysis. L102 lines the 5-amino-6-(D-ribitylamino)uracil pocket. Residue R117 participates in (2S)-2-hydroxy-3-oxobutyl phosphate binding.

The protein belongs to the DMRL synthase family.

The catalysed reaction is (2S)-2-hydroxy-3-oxobutyl phosphate + 5-amino-6-(D-ribitylamino)uracil = 6,7-dimethyl-8-(1-D-ribityl)lumazine + phosphate + 2 H2O + H(+). The protein operates within cofactor biosynthesis; riboflavin biosynthesis; riboflavin from 2-hydroxy-3-oxobutyl phosphate and 5-amino-6-(D-ribitylamino)uracil: step 1/2. In terms of biological role, catalyzes the formation of 6,7-dimethyl-8-ribityllumazine by condensation of 5-amino-6-(D-ribitylamino)uracil with 3,4-dihydroxy-2-butanone 4-phosphate. This is the penultimate step in the biosynthesis of riboflavin. This Methanothermobacter thermautotrophicus (strain ATCC 29096 / DSM 1053 / JCM 10044 / NBRC 100330 / Delta H) (Methanobacterium thermoautotrophicum) protein is 6,7-dimethyl-8-ribityllumazine synthase.